We begin with the raw amino-acid sequence, 120 residues long: MSIRTDKVSSLLQRELSAIFEKELPRSGPLVTVTEVRMTADLGIARVYVSVIGSEAQRAEVMEYLDAENKMIRKTLSAKIRHQFRRIPELEFYEDRLFEQANRIEQLLKSVKPARDEEQH.

The protein belongs to the RbfA family. Monomer. Binds 30S ribosomal subunits, but not 50S ribosomal subunits or 70S ribosomes.

The protein resides in the cytoplasm. Its function is as follows. One of several proteins that assist in the late maturation steps of the functional core of the 30S ribosomal subunit. Associates with free 30S ribosomal subunits (but not with 30S subunits that are part of 70S ribosomes or polysomes). Required for efficient processing of 16S rRNA. May interact with the 5'-terminal helix region of 16S rRNA. In Chlorobaculum tepidum (strain ATCC 49652 / DSM 12025 / NBRC 103806 / TLS) (Chlorobium tepidum), this protein is Ribosome-binding factor A.